A 410-amino-acid chain; its full sequence is Cysteine desulfurase IscS (410 aa).

Residues 80–81, asparagine 160, glutamine 188, and 208–210 contribute to the pyridoxal 5'-phosphate site; these read AT and SGH. Residue lysine 211 is modified to N6-(pyridoxal phosphate)lysine. Residue threonine 248 participates in pyridoxal 5'-phosphate binding. Catalysis depends on cysteine 334, which acts as the Cysteine persulfide intermediate. Cysteine 334 provides a ligand contact to [2Fe-2S] cluster.

This sequence belongs to the class-V pyridoxal-phosphate-dependent aminotransferase family. NifS/IscS subfamily. In terms of assembly, homodimer. Forms a heterotetramer with IscU, interacts with other sulfur acceptors. Pyridoxal 5'-phosphate serves as cofactor.

Its subcellular location is the cytoplasm. The enzyme catalyses (sulfur carrier)-H + L-cysteine = (sulfur carrier)-SH + L-alanine. It participates in cofactor biosynthesis; iron-sulfur cluster biosynthesis. Master enzyme that delivers sulfur to a number of partners involved in Fe-S cluster assembly, tRNA modification or cofactor biosynthesis. Catalyzes the removal of elemental sulfur atoms from cysteine to produce alanine. Functions as a sulfur delivery protein for Fe-S cluster synthesis onto IscU, an Fe-S scaffold assembly protein, as well as other S acceptor proteins. The chain is Cysteine desulfurase IscS from Rickettsia akari (strain Hartford).